Consider the following 154-residue polypeptide: MNVIEGNLVGTGLKIGIVVSRFNEFITSKLLSGAIDGLTRHGVSDNDITVTWVPGAFEIPLVAKKMAESKQFDAIITLGAVIRGATSHFDYVCSEAAKGVSHAALTSGVPVIFGVLTTDTIEQAIERAGTKAGNKGWEAAVSAIEMANVLRGLA.

5-amino-6-(D-ribitylamino)uracil contacts are provided by residues Phe-22, Ala-56–Glu-58, and Ala-80–Ile-82. Residue Ala-85–Thr-86 participates in (2S)-2-hydroxy-3-oxobutyl phosphate binding. The active-site Proton donor is His-88. Phe-113 is a binding site for 5-amino-6-(D-ribitylamino)uracil. Residue Arg-127 participates in (2S)-2-hydroxy-3-oxobutyl phosphate binding.

Belongs to the DMRL synthase family. Forms an icosahedral capsid composed of 60 subunits, arranged as a dodecamer of pentamers.

It carries out the reaction (2S)-2-hydroxy-3-oxobutyl phosphate + 5-amino-6-(D-ribitylamino)uracil = 6,7-dimethyl-8-(1-D-ribityl)lumazine + phosphate + 2 H2O + H(+). Its pathway is cofactor biosynthesis; riboflavin biosynthesis; riboflavin from 2-hydroxy-3-oxobutyl phosphate and 5-amino-6-(D-ribitylamino)uracil: step 1/2. Its function is as follows. Catalyzes the formation of 6,7-dimethyl-8-ribityllumazine by condensation of 5-amino-6-(D-ribitylamino)uracil with 3,4-dihydroxy-2-butanone 4-phosphate. This is the penultimate step in the biosynthesis of riboflavin. The polypeptide is 6,7-dimethyl-8-ribityllumazine synthase (Geobacillus thermodenitrificans (strain NG80-2)).